The sequence spans 433 residues: Glucose-6-phosphate isomerase (433 aa).

Glu-285 serves as the catalytic Proton donor. Catalysis depends on residues His-306 and Lys-421.

This sequence belongs to the GPI family.

It is found in the cytoplasm. It carries out the reaction alpha-D-glucose 6-phosphate = beta-D-fructose 6-phosphate. Its pathway is carbohydrate biosynthesis; gluconeogenesis. It participates in carbohydrate degradation; glycolysis; D-glyceraldehyde 3-phosphate and glycerone phosphate from D-glucose: step 2/4. Functionally, catalyzes the reversible isomerization of glucose-6-phosphate to fructose-6-phosphate. This is Glucose-6-phosphate isomerase from Mycoplasma mobile (strain ATCC 43663 / 163K / NCTC 11711) (Mesomycoplasma mobile).